The primary structure comprises 242 residues: Type III pantothenate kinase (242 aa).

Position 7–14 (7–14) interacts with ATP; that stretch reads DNSNTRTK. Residues Y88 and 95–98 contribute to the substrate site; that span reads GADR. D97 serves as the catalytic Proton acceptor. D117 is a binding site for K(+). T120 provides a ligand contact to ATP. T172 contributes to the substrate binding site.

Belongs to the type III pantothenate kinase family. Homodimer. NH4(+) is required as a cofactor. The cofactor is K(+).

The protein localises to the cytoplasm. The catalysed reaction is (R)-pantothenate + ATP = (R)-4'-phosphopantothenate + ADP + H(+). The protein operates within cofactor biosynthesis; coenzyme A biosynthesis; CoA from (R)-pantothenate: step 1/5. Catalyzes the phosphorylation of pantothenate (Pan), the first step in CoA biosynthesis. This chain is Type III pantothenate kinase, found in Akkermansia muciniphila (strain ATCC BAA-835 / DSM 22959 / JCM 33894 / BCRC 81048 / CCUG 64013 / CIP 107961 / Muc).